The sequence spans 2531 residues: Serine/threonine-protein kinase ATR (2531 aa).

Residues 1490–2067 enclose the FAT domain; it reads LIVKVAETFG…MWQSAYLLRQ (578 aa). The PI3K/PI4K catalytic domain maps to 2192 to 2512; the sequence is FSDKVKVLHS…VSQLASSLIE (321 aa). Residues 2198–2204 form a G-loop region; that stretch reads VLHSNTK. A catalytic loop region spans residues 2368 to 2376; the sequence is GLGDRHTKN. The tract at residues 2387–2411 is activation loop; that stretch reads HVDFDMIFNKGETLGTPELVPFRLT. In terms of domain architecture, FATC spans 2499 to 2531; sequence HPMQVSQLASSLIELATSEEKLSEMYLGWMATL.

Belongs to the PI3/PI4-kinase family. ATM subfamily. It depends on Mn(2+) as a cofactor.

Its subcellular location is the nucleus. The enzyme catalyses L-seryl-[protein] + ATP = O-phospho-L-seryl-[protein] + ADP + H(+). The catalysed reaction is L-threonyl-[protein] + ATP = O-phospho-L-threonyl-[protein] + ADP + H(+). Its function is as follows. Serine/threonine protein kinase which activates checkpoint signaling upon genotoxic stresses such as ionizing radiation (IR), ultraviolet light (UV), or DNA replication stalling, thereby acting as a DNA damage sensor. Recognizes the substrate consensus sequence [ST]-Q. Phosphorylates various proteins, which collectively inhibits DNA replication and mitosis and promotes DNA repair and recombination. Prevents mitotic catastrophe by functioning in the S-phase checkpoint and cooperating with atm-1 in the checkpoint response to double-strand breaks (DSBs) after ionizing radiation (IR) to induce cell cycle arrest or apoptosis via the cep-1/p53 pathway. In response to ionizing radiation, probably required for the association between the brc-1-brd-1 heterodimer and rad-51 and let-70 in order to activate E3-ubiquitin ligase activity of the heterodimer and induce ubiquitination at DNA damage sites. This chain is Serine/threonine-protein kinase ATR, found in Caenorhabditis elegans.